The primary structure comprises 114 residues: Large ribosomal subunit protein bL19 (114 aa).

Belongs to the bacterial ribosomal protein bL19 family.

This protein is located at the 30S-50S ribosomal subunit interface and may play a role in the structure and function of the aminoacyl-tRNA binding site. This is Large ribosomal subunit protein bL19 (rplS) from Listeria innocua serovar 6a (strain ATCC BAA-680 / CLIP 11262).